Consider the following 28-residue polypeptide: Antibacterial protein LC3 (28 aa).

Functionally, antibacterial activity against X.campestris, especially strain G, and P.solacearum PO1. In Bacillus subtilis, this protein is Antibacterial protein LC3.